A 517-amino-acid chain; its full sequence is Ribonuclease Y (517 aa).

Residues 1–21 (MIEVLIGLGAGVAGVGAGYLY) form a helical membrane-spanning segment. One can recognise a KH domain in the interval 207–273 (LINVVNIKND…TRVIELLVED (67 aa)). In terms of domain architecture, HD spans 333–426 (ALAHSLEVAH…VCAADCLSAA (94 aa)).

The protein belongs to the RNase Y family.

The protein resides in the cell membrane. Its function is as follows. Endoribonuclease that initiates mRNA decay. This chain is Ribonuclease Y, found in Campylobacter curvus (strain 525.92).